The following is a 693-amino-acid chain: MALTAAELEAIRRGLGRGPTPVELALFTAHWSEHCAYKSTRGRLSRLPSKAPWVVKGPGTDAPLVEVAPGLYVTFKIESHNHPSAVDPYNGAATGVGGIIRDILTVGAKPIALLVNLHFGPPQDAHAKWIAQGVVRGISDYGNRVGVPVVGGETWFDEDFTYTPIVLATCVGVVSAEDVPRGGVEAGDLFIVVGSGADKSGLGGSAFASKTLTEEEDLGAVQVADPLMGKRLIDLVQEARQCVKYIKDLGGGGLATAAAELAHWFGLGLEIDLDKIHMSDAEMGPAEVLISETQERLVLVTSEGQLPCLKALFEKYDVPYSVVGRFTEGGRLVFKWRGEVVGDVPVELAANAPVLEWPTRPYKAKPLPDLPQPPLDKAIDAVLSSPNVAKKAAIYERFDFDVGVRTVVKPGEGDAAVLKLLELGDVGIVVKGDANPRYTYLSPRLGAANAFVKAYRNVVVARGIPLAAVDSINLGSPARPEVYWQFVEAVEGLAEAAEALGVPIVGGKVSLYNEYLDKPIKPVVAVVVLGKIDDVGKAAKATWEAGDGIYLWGVTKAEVGGSEYLYRIFGEVAGEPPAVDYAVEKEILRLVGTWRPRKATDVGLGGLAAALAKMAVNSGVGADVDICKAPAETTRLDFLLFSESNGRFITAGEEGPGVKIGEAEGEKLRLRCGGTLLYKRKVEELRELMALRL.

The active site involves His34. ATP is bound by residues Tyr37 and Lys76. Position 78 (Glu78) interacts with Mg(2+). Substrate-binding positions include 79–82 and Arg101; that span reads SHNH. Catalysis depends on His80, which acts as the Proton acceptor. Asp102 contributes to the Mg(2+) binding site. Gln222 serves as a coordination point for substrate. Asp248 is a Mg(2+) binding site. 292-294 contacts substrate; the sequence is ETQ. Residues Asp470 and Gly507 each contribute to the ATP site. Ser510 contacts substrate.

The protein belongs to the FGAMS family. As to quaternary structure, monomer. Part of the FGAM synthase complex composed of 1 PurL, 1 PurQ and 2 PurS subunits.

The protein localises to the cytoplasm. It carries out the reaction N(2)-formyl-N(1)-(5-phospho-beta-D-ribosyl)glycinamide + L-glutamine + ATP + H2O = 2-formamido-N(1)-(5-O-phospho-beta-D-ribosyl)acetamidine + L-glutamate + ADP + phosphate + H(+). The protein operates within purine metabolism; IMP biosynthesis via de novo pathway; 5-amino-1-(5-phospho-D-ribosyl)imidazole from N(2)-formyl-N(1)-(5-phospho-D-ribosyl)glycinamide: step 1/2. Part of the phosphoribosylformylglycinamidine synthase complex involved in the purines biosynthetic pathway. Catalyzes the ATP-dependent conversion of formylglycinamide ribonucleotide (FGAR) and glutamine to yield formylglycinamidine ribonucleotide (FGAM) and glutamate. The FGAM synthase complex is composed of three subunits. PurQ produces an ammonia molecule by converting glutamine to glutamate. PurL transfers the ammonia molecule to FGAR to form FGAM in an ATP-dependent manner. PurS interacts with PurQ and PurL and is thought to assist in the transfer of the ammonia molecule from PurQ to PurL. This is Phosphoribosylformylglycinamidine synthase subunit PurL from Pyrobaculum calidifontis (strain DSM 21063 / JCM 11548 / VA1).